A 210-amino-acid chain; its full sequence is Small ribosomal subunit protein uS4 (210 aa).

The 61-residue stretch at 100 to 160 (GRLDNVVYRM…EKSKNQLRVK (61 aa)) folds into the S4 RNA-binding domain.

Belongs to the universal ribosomal protein uS4 family. As to quaternary structure, part of the 30S ribosomal subunit. Contacts protein S5. The interaction surface between S4 and S5 is involved in control of translational fidelity.

One of the primary rRNA binding proteins, it binds directly to 16S rRNA where it nucleates assembly of the body of the 30S subunit. In terms of biological role, with S5 and S12 plays an important role in translational accuracy. The sequence is that of Small ribosomal subunit protein uS4 from Alcanivorax borkumensis (strain ATCC 700651 / DSM 11573 / NCIMB 13689 / SK2).